Consider the following 167-residue polypeptide: Transcription factor 24 (167 aa).

The segment covering 1–23 (MDRGRPAGSPLSASAEPAPLAAA) has biased composition (low complexity). Residues 1 to 60 (MDRGRPAGSPLSASAEPAPLAAAIRDSRPGRTGPGPAGPGGGSRSGSGRPAAANAARERS) form a disordered region. The segment covering 32–45 (TGPGPAGPGGGSRS) has biased composition (gly residues). Residues 46–55 (GSGRPAAANA) are compositionally biased toward low complexity. In terms of domain architecture, bHLH spans 49–101 (RPAAANAARERSRVQTLRHAFLELQRTLPSVPPDTKLSKLDVLLLATTYIAHL).

As to quaternary structure, efficient DNA binding requires dimerization with another bHLH protein.

It localises to the nucleus. In terms of biological role, putative transcription factor. This is Transcription factor 24 (TCF24) from Homo sapiens (Human).